Reading from the N-terminus, the 1766-residue chain is Putative ATP-dependent RNA helicase R366 (1766 aa).

The disordered stretch occupies residues 209–239; that stretch reads KSSSNQNSNQSNQESNESNQEPNESNQEINQ. Over residues 210–239 the composition is skewed to low complexity; it reads SSSNQNSNQSNQESNESNQEPNESNQEINQ. A Helicase ATP-binding domain is found at 656–865; sequence YHHYSNNRVL…RYYRRINDNR (210 aa). ATP is bound at residue 669-676; the sequence is GATGVGKS. Positions 812 to 815 match the DEAH box motif; sequence DEAH. The Helicase C-terminal domain maps to 947 to 1116; sequence DIHKSIKAIN…TMVKLIKSYP (170 aa).

Belongs to the DEAD box helicase family. DEAH subfamily.

It catalyses the reaction ATP + H2O = ADP + phosphate + H(+). The sequence is that of Putative ATP-dependent RNA helicase R366 from Acanthamoeba polyphaga mimivirus (APMV).